The chain runs to 192 residues: Pyridoxal 5'-phosphate synthase subunit PdxT (192 aa).

53–55 (GES) is an L-glutamine binding site. Cys82 functions as the Nucleophile in the catalytic mechanism. L-glutamine is bound by residues Arg108 and 134 to 135 (IR). Catalysis depends on charge relay system residues His170 and Glu172.

It belongs to the glutaminase PdxT/SNO family. In the presence of PdxS, forms a dodecamer of heterodimers. Only shows activity in the heterodimer.

It carries out the reaction aldehydo-D-ribose 5-phosphate + D-glyceraldehyde 3-phosphate + L-glutamine = pyridoxal 5'-phosphate + L-glutamate + phosphate + 3 H2O + H(+). The catalysed reaction is L-glutamine + H2O = L-glutamate + NH4(+). The protein operates within cofactor biosynthesis; pyridoxal 5'-phosphate biosynthesis. Catalyzes the hydrolysis of glutamine to glutamate and ammonia as part of the biosynthesis of pyridoxal 5'-phosphate. The resulting ammonia molecule is channeled to the active site of PdxS. This chain is Pyridoxal 5'-phosphate synthase subunit PdxT, found in Methanosphaera stadtmanae (strain ATCC 43021 / DSM 3091 / JCM 11832 / MCB-3).